The chain runs to 195 residues: UPF0215 protein TSIB_1161 (195 aa).

It belongs to the UPF0215 family.

The protein is UPF0215 protein TSIB_1161 of Thermococcus sibiricus (strain DSM 12597 / MM 739).